The primary structure comprises 448 residues: MKSYEVNFDGLVGPTHNYGGLSYGNVASQSNSQQGSNPREAALQGLAKMKALMEMGFQQGVLAPQERPDVAALRNLGFAGTDAQVIQQAAKQAMPLLVASCSASSMWVANAATVSPSADTADGRVHFTAANLNCKYHRSIEHPTTSRVLGAMFADQKHFAHHAALPAVAQFGDEGAANHTRFCRDYGQAGVEFFVFGRSAFDTRYPAPQKYPARQTLEASQAVARLHGLSEEGVVYAQQNPSVIDQGVFHNDVIAVGNGEVLFYHEDAFLETDKMLAELQGKLGKRGGNFQSICVPRSQVTVEDAVRSYLFNSQLLSRADGSMLLIVPEECRGNERVWQYLQSLTSSGGLIREVKVFDLKQSMQNGGGPACLRLRVALKETELAAVNPGVIMTAPLYDTLTQWVGKHYRDRLSESDLADPQLLLECRTALDELTQILKLGAVYPFQIN.

Substrate is bound by residues 19-28 (GGLSYGNVAS), asparagine 110, and 137-138 (HR). Residue glutamate 174 is part of the active site. Arginine 214 is a substrate binding site. Histidine 250 is an active-site residue. Positions 252 and 365 each coordinate substrate. Cysteine 371 acts as the Nucleophile in catalysis.

It belongs to the succinylarginine dihydrolase family. In terms of assembly, homodimer.

It catalyses the reaction N(2)-succinyl-L-arginine + 2 H2O + 2 H(+) = N(2)-succinyl-L-ornithine + 2 NH4(+) + CO2. The protein operates within amino-acid degradation; L-arginine degradation via AST pathway; L-glutamate and succinate from L-arginine: step 2/5. In terms of biological role, catalyzes the hydrolysis of N(2)-succinylarginine into N(2)-succinylornithine, ammonia and CO(2). This Pseudomonas fluorescens (strain ATCC BAA-477 / NRRL B-23932 / Pf-5) protein is N-succinylarginine dihydrolase.